Here is a 186-residue protein sequence, read N- to C-terminus: MIPEASYDVVVVGAGPAGSTAAMYAAKNGASVLLLDKKREIGSPIQCAGFLPDASEVQALLREAMLPDTLKNYPDSCVLQRIDNQRIFTPNCNIKEFAVRGAVLDRCRYDQFLAEQAARAGAELMIKTRVTKIEGTTVETSGVFGKYRIKAKAIIGADGPNSLVAKSKGLALTSGSRETRLLSNTR.

The protein belongs to the geranylgeranyl reductase family. ChlP subfamily.

This is an uncharacterized protein from Methanosarcina barkeri.